Reading from the N-terminus, the 75-residue chain is Small ribosomal subunit protein bS18c (75 aa).

Belongs to the bacterial ribosomal protein bS18 family. In terms of assembly, part of the 30S ribosomal subunit.

Its subcellular location is the plastid. It localises to the chloroplast. The chain is Small ribosomal subunit protein bS18c from Psilotum nudum (Whisk fern).